The following is a 165-amino-acid chain: Interferon gamma (165 aa).

An N-terminal signal peptide occupies residues 1 to 23; that stretch reads MKYTSYILAFQLCIVLGSLGCYC. Gln24 carries the pyrrolidone carboxylic acid modification. 2 N-linked (GlcNAc...) asparagine glycosylation sites follow: Asn48 and Asn120.

The protein belongs to the type II (or gamma) interferon family. In terms of assembly, homodimer. Interacts with IFNGR1 (via extracellular domain); this interaction promotes IFNGR1 dimerization.

It is found in the secreted. Its function is as follows. Type II interferon produced by immune cells such as T-cells and NK cells that plays crucial roles in antimicrobial, antiviral, and antitumor responses by activating effector immune cells and enhancing antigen presentation. Primarily signals through the JAK-STAT pathway after interaction with its receptor IFNGR1 to affect gene regulation. Upon IFNG binding, IFNGR1 intracellular domain opens out to allow association of downstream signaling components JAK2, JAK1 and STAT1, leading to STAT1 activation, nuclear translocation and transcription of IFNG-regulated genes. Many of the induced genes are transcription factors such as IRF1 that are able to further drive regulation of a next wave of transcription. Plays a role in class I antigen presentation pathway by inducing a replacement of catalytic proteasome subunits with immunoproteasome subunits. In turn, increases the quantity, quality, and repertoire of peptides for class I MHC loading. Increases the efficiency of peptide generation also by inducing the expression of activator PA28 that associates with the proteasome and alters its proteolytic cleavage preference. Up-regulates as well MHC II complexes on the cell surface by promoting expression of several key molecules such as cathepsins B/CTSB, H/CTSH, and L/CTSL. Participates in the regulation of hematopoietic stem cells during development and under homeostatic conditions by affecting their development, quiescence, and differentiation. This Papio anubis (Olive baboon) protein is Interferon gamma (IFNG).